Reading from the N-terminus, the 198-residue chain is Elongation factor Ts (198 aa).

Residues 81–84 (TDFV) form an involved in Mg(2+) ion dislocation from EF-Tu region.

It belongs to the EF-Ts family.

The protein localises to the cytoplasm. Functionally, associates with the EF-Tu.GDP complex and induces the exchange of GDP to GTP. It remains bound to the aminoacyl-tRNA.EF-Tu.GTP complex up to the GTP hydrolysis stage on the ribosome. This Dictyoglomus thermophilum (strain ATCC 35947 / DSM 3960 / H-6-12) protein is Elongation factor Ts.